The following is a 104-amino-acid chain: MAIVKVTDSNFDDNIQSGVNLVDFWATWCGPCKMIAPVLEELAGDYDGKANILKLDVDENPSTAAKFEVMSIPTLIVFKDGEPVDKVVGFQPKENLAEVIEKHL.

A Thioredoxin domain is found at 2–104 (AIVKVTDSNF…NLAEVIEKHL (103 aa)). A disulfide bridge connects residues Cys-29 and Cys-32.

It belongs to the thioredoxin family.

Functionally, component of the thioredoxin-thioredoxin reductase system. Participates in various redox reactions through the reversible oxidation of its active center dithiol to a disulfide and catalyzes dithiol-disulfide exchange reactions. In Staphylococcus saprophyticus subsp. saprophyticus (strain ATCC 15305 / DSM 20229 / NCIMB 8711 / NCTC 7292 / S-41), this protein is Thioredoxin (trxA).